The sequence spans 124 residues: MPTVKQLIRNARQPIRNARKTAALKGCPQRRGTCARVYTINPKKPNSALRKVARVRLTSGFEITAYIPGIGHNLQEHSVVLVRGGRVKDLPGVRYRIIRGTLDAVAVKNRQQGRSKYGVKKPKK.

Belongs to the universal ribosomal protein uS12 family. As to quaternary structure, part of the 30S ribosomal subunit.

The protein resides in the plastid. Its subcellular location is the chloroplast. Its function is as follows. With S4 and S5 plays an important role in translational accuracy. Located at the interface of the 30S and 50S subunits. This chain is Small ribosomal subunit protein uS12cz/uS12cy (rps12-A), found in Agrostis stolonifera (Creeping bentgrass).